The sequence spans 413 residues: Docking protein 2 (413 aa).

The PH domain occupies 4-114 (VVVKQGFLYL…WIQAICLLAF (111 aa)). Positions 147–252 (PQKEFAVTVR…SAQKNAAPPG (106 aa)) constitute an IRS-type PTB domain. The interval 247–292 (NAAPPGPQTQPVPVPAVLPRPESPYARPHDSLPPPSPTVPVPTPRQ) is disordered. Residues 250-268 (PPGPQTQPVPVPAVLPRPE) are compositionally biased toward pro residues. Y271 carries the post-translational modification Phosphotyrosine. A compositionally biased stretch (pro residues) spans 277-289 (SLPPPSPTVPVPT). Phosphotyrosine occurs at positions 300 and 346. Residues 362–381 (QEPRGEAWRRQATADRDSSG) show a composition bias toward basic and acidic residues. The interval 362–383 (QEPRGEAWRRQATADRDSSGLK) is disordered.

This sequence belongs to the DOK family. Type A subfamily. As to quaternary structure, interacts with phosphorylated RASGAP and EGFR. Interacts with RET and NCK. Interacts (via PH domain) with TEK/TIE2 (tyrosine phosphorylated). On immunoreceptor stimulation, phosphorylated on C-terminal tyrosine residues. Phosphorylation on Tyr-346 is required for binding to the SH2 domain of NCK. Phosphorylation on both Tyr-271 and Tyr-300 is required for interaction with RASGAP. Phosphorylated on tyrosine residues by TEK/TIE2.

In terms of biological role, DOK proteins are enzymatically inert adaptor or scaffolding proteins. They provide a docking platform for the assembly of multimolecular signaling complexes. DOK2 may modulate the cellular proliferation induced by IL-4, as well as IL-2 and IL-3. May be involved in modulating Bcr-Abl signaling. Attenuates EGF-stimulated MAP kinase activation. The chain is Docking protein 2 (DOK2) from Bos taurus (Bovine).